Reading from the N-terminus, the 204-residue chain is Protein PAXX (204 aa).

A PISA domain is found at 37–79 (FNLYVTDAAELWSTCFTPDSLAALKARFGLSAAEDITPRFRAA). Ser134 is subject to Phosphoserine. A disordered region spans residues 143–204 (EETAVSPRKS…PAGGVDFDET (62 aa)). Thr145 is subject to Phosphothreonine. Phosphoserine occurs at positions 148 and 152. The interval 171–204 (GPGPGVRRRCPGESLINPGFKSKKPAGGVDFDET) is mediates interaction with XRCC5/Ku80 and XRCC6/Ku70 and association with the non-homologous end joining core complex. Residues 190 to 204 (FKSKKPAGGVDFDET) carry the XLM motif.

The protein belongs to the XRCC4-XLF family. PAXX subfamily. Homodimer. Interacts with the DNA-bound XRCC5/Ku80 and XRCC6/Ku70 heterodimer (Ku complex); the interaction is direct. Associated component of the non-homologous end joining (NHEJ) complex, composed of the core proteins PRKDC, LIG4, XRCC4, XRCC6/Ku70, XRCC5/Ku86 and NHEJ1/XLF. Interacts with POLL (DNA polymerase lambda); promoting POLL recruitment to double-strand breaks (DSBs) and stimulation of the end-filling activity of POLL. Post-translationally, phosphorylation may inhibit interaction with the DNA-bound XRCC5/Ku80 and XRCC6/Ku70 heterodimer (Ku complex).

Its subcellular location is the nucleus. It localises to the chromosome. The protein localises to the cytoplasm. Functionally, non-essential DNA repair protein involved in DNA non-homologous end joining (NHEJ); participates in double-strand break (DSB) repair and V(D)J recombination. May act as a scaffold required for accumulation of the Ku heterodimer, composed of XRCC5/Ku80 and XRCC6/Ku70, at double-strand break sites and promote the assembly and/or stability of the NHEJ machinery. Involved in NHEJ by promoting the ligation of blunt-ended DNA ends. Together with NHEJ1/XLF, collaborates with DNA polymerase lambda (POLL) to promote joining of non-cohesive DNA ends. Constitutes a non-essential component of classical NHEJ: has a complementary but distinct function with NHEJ1/XLF in DNA repair. Able to restrict infection by herpesvirus 1 (HSV-1) via an unknown mechanism. The protein is Protein PAXX of Homo sapiens (Human).